Here is a 518-residue protein sequence, read N- to C-terminus: ESX-3 secretion system ATPase EccB3 (518 aa).

The segment at 1-26 is disordered; it reads MTGPVNPDDRRSFSSRTPVNENPDGV. Residues 71–91 form a helical membrane-spanning segment; the sequence is VLTGALILVTGLVGCFIFSLF.

The protein belongs to the EccB family. In terms of assembly, part of the ESX-3 / type VII secretion system (T7SS), which is composed of cytosolic and membrane components. The ESX-3 membrane complex is composed of EccB3, EccC3, EccD3 and EccE3.

It localises to the cell inner membrane. Its function is as follows. An ATPase. Part of the ESX-3 specialized secretion system, which is required for siderophore-mediated iron acquisition and for the secretion of EsxH and EsxG. This is ESX-3 secretion system ATPase EccB3 from Mycolicibacterium smegmatis (strain ATCC 700084 / mc(2)155) (Mycobacterium smegmatis).